The sequence spans 834 residues: DNA polymerase I, thermostable (834 aa).

A 5'-3' exonuclease domain is found at 176-262 (RPEQWVDFRA…DLPLEVDLAQ (87 aa)). Residues 412–834 (ERLHRNLLKR…MGEDWLSAKG (423 aa)) are polymerase.

The protein belongs to the DNA polymerase type-A family.

The enzyme catalyses DNA(n) + a 2'-deoxyribonucleoside 5'-triphosphate = DNA(n+1) + diphosphate. Functionally, in addition to polymerase activity, this DNA polymerase exhibits 5'-3' exonuclease activity. In Thermus thermophilus (strain ATCC 27634 / DSM 579 / HB8), this protein is DNA polymerase I, thermostable (polA).